The chain runs to 240 residues: Fibronectin type III domain-containing protein 5 (240 aa).

Residues 1–10 are compositionally biased toward gly residues; sequence MQAARGGAGR. A disordered region spans residues 1–30; it reads MQAARGGAGRPGREGRGLERECERSPGVGA. The span at 11 to 24 shows a compositional bias: basic and acidic residues; sequence PGREGRGLERECER. Positions 64 to 155 constitute a Fibronectin type-III domain; sequence APVNVTVRHL…EPVLFKTPRE (92 aa). 2 N-linked (GlcNAc...) asparagine glycosylation sites follow: Asn-67 and Asn-112. The helical transmembrane segment at 181-201 threads the bilayer; the sequence is GEVLIIVVVLFMWAGVIALFC. The segment covering 210–221 has biased composition (basic and acidic residues); that stretch reads NEPNNNKEKTKS. The disordered stretch occupies residues 210 to 240; the sequence is NEPNNNKEKTKSASETSTPEHQGGGLLRSKI. Residues 231–240 are compositionally biased toward gly residues; the sequence is QGGGLLRSKI. The Microbody targeting signal motif lies at 238–240; it reads SKI.

In terms of assembly, dimer; may exist in other oligomeric forms. Post-translationally, N-Glycosylated. In terms of processing, the extracellular domain is cleaved and released from the cell membrane.

The protein resides in the cell membrane. It is found in the peroxisome membrane. It localises to the secreted. Mediates beneficial effects of muscular exercise. Induces browning of white adipose tissue by stimulating UCP1 expression, at least in part, via the nuclear receptor PPARA. This is Fibronectin type III domain-containing protein 5 (Fndc5) from Rattus norvegicus (Rat).